The sequence spans 134 residues: Small ribosomal subunit protein uS9 (134 aa).

The segment at 109 to 134 (DARRTEPHKPSKSSKGPRAKRQKSYR) is disordered. Basic residues predominate over residues 118–134 (PSKSSKGPRAKRQKSYR).

This sequence belongs to the universal ribosomal protein uS9 family.

In Methanococcus maripaludis (strain DSM 14266 / JCM 13030 / NBRC 101832 / S2 / LL), this protein is Small ribosomal subunit protein uS9.